The primary structure comprises 127 residues: Glycine cleavage system H protein 1 (127 aa).

The Lipoyl-binding domain maps to 20 to 101 (LLTVGITAYA…LGEAWFFRFR (82 aa)). The residue at position 60 (Lys60) is an N6-lipoyllysine.

The protein belongs to the GcvH family. As to quaternary structure, the glycine cleavage system is composed of four proteins: P, T, L and H. (R)-lipoate is required as a cofactor.

Its function is as follows. The glycine cleavage system catalyzes the degradation of glycine. The H protein shuttles the methylamine group of glycine from the P protein to the T protein. This is Glycine cleavage system H protein 1 from Pseudomonas aeruginosa (strain ATCC 15692 / DSM 22644 / CIP 104116 / JCM 14847 / LMG 12228 / 1C / PRS 101 / PAO1).